A 345-amino-acid chain; its full sequence is MTLINPNIQESNKLKFKDESYLDFNSINGGDIRHDWSSEEIKEILDLPLMDLLWRAQIVHRSYNPGYKVQLASLLSVKTGGCSEDCAYCPQSVHNETTVQPNPVIEVESVLDRARAAKDAGADRFCMGWAWREIKDGNAFDSMLEMVRGVRELGLEACVTAGMITDSQASRLAEAGLTAYNHNLDTSPEHYSKIISTRTYQDRLETLRRVRMAGITVCCGGIIGMGESVSDRASLLKVLATLDPHPESVPINALVAVEGTPMEDLSSIDPLEMVRMVATARVIMPKSRIRLSAGRQQLGREAQILCLQSGADSIFYGDTLLTTSNPEVEADRKLLADAGITANFS.

The region spanning 67–295 (YKVQLASLLS…KSRIRLSAGR (229 aa)) is the Radical SAM core domain. The [4Fe-4S] cluster site is built by C82, C86, and C89. Positions 126, 158, 218, and 290 each coordinate [2Fe-2S] cluster.

It belongs to the radical SAM superfamily. Biotin synthase family. Homodimer. It depends on [4Fe-4S] cluster as a cofactor. Requires [2Fe-2S] cluster as cofactor.

It catalyses the reaction (4R,5S)-dethiobiotin + (sulfur carrier)-SH + 2 reduced [2Fe-2S]-[ferredoxin] + 2 S-adenosyl-L-methionine = (sulfur carrier)-H + biotin + 2 5'-deoxyadenosine + 2 L-methionine + 2 oxidized [2Fe-2S]-[ferredoxin]. It participates in cofactor biosynthesis; biotin biosynthesis; biotin from 7,8-diaminononanoate: step 2/2. Functionally, catalyzes the conversion of dethiobiotin (DTB) to biotin by the insertion of a sulfur atom into dethiobiotin via a radical-based mechanism. The sequence is that of Biotin synthase from Prochlorococcus marinus (strain NATL1A).